The following is a 169-amino-acid chain: Cell cycle link protein (169 aa).

Residues 9-22 are binding to host SKP1 protein; that stretch reads LPLELREKIVRDHL. Positions 110 to 114 match the LXCXE motif, interaction with host RBR motif; sequence LSCGE.

Belongs to the nanovirus Clink protein family. In terms of assembly, interacts with host SKP1. Interacts (via LXCXE domain) with host retinoblastoma-related protein 1 (RBR1). Interacts (via LXCXE domain) with retinoblastoma-related proteins (RBR).

In terms of biological role, interacts with and disrupts the function of host retinoblastoma-related proteins RBR, which are key regulators of the cell cycle. Induces transcriptional activation of E2F-regulated S-phase and G2/M-phase-specific genes. Inactivation of the ability of RBR to arrest the cell cycle leads to the stimulation of viral DNA replication. The chain is Cell cycle link protein (DNA-C) from Astragalus sinicus (Chinese milk vetch).